The chain runs to 899 residues: 1,4-alpha-glucan-branching enzyme 3, chloroplastic/amyloplastic (899 aa).

Residues M1–R49 constitute a chloroplast transit peptide. Positions R47–A67 are disordered. The active-site Proton donor is E612.

The protein belongs to the glycosyl hydrolase 13 family. GlgB subfamily. As to quaternary structure, monomer. Mostly expressed in flowers and inflorescence, and, to a lower extent, in seedlings, roots, stems, leaves, siliques and seeds.

The protein resides in the plastid. Its subcellular location is the chloroplast stroma. It is found in the amyloplast. It carries out the reaction Transfers a segment of a (1-&gt;4)-alpha-D-glucan chain to a primary hydroxy group in a similar glucan chain.. It functions in the pathway glycan biosynthesis; starch biosynthesis. Functionally, catalyzes the formation of the alpha-1,6-glucosidic linkages in starch by scission of a 1,4-alpha-linked oligosaccharide from growing alpha-1,4-glucan chains and the subsequent attachment of the oligosaccharide to the alpha-1,6 position. Essential during embryogenesis. The chain is 1,4-alpha-glucan-branching enzyme 3, chloroplastic/amyloplastic (SBE3) from Arabidopsis thaliana (Mouse-ear cress).